A 194-amino-acid chain; its full sequence is uncharacterized protein (194 aa).

Residues 62 to 93 form a disordered region; that stretch reads GGAGRRTSKAQRVHPQPSHQRQPPPPQHPGPY.

In terms of tissue distribution, expressed most abundantly in the brain at protein level. Present in cortex, cerebellum and midbrain. Found in neurons. Elevated expressions detected in Alzheimer brain samples. Also expressed in testis.

The protein resides in the cytoplasm. This is an uncharacterized protein from Homo sapiens (Human).